Here is a 490-residue protein sequence, read N- to C-terminus: GTPase Der (490 aa).

EngA-type G domains follow at residues 3-166 (PVVA…MEDL) and 203-376 (IKLA…DSST). Residues 9–16 (GRPNVGKS), 56–60 (DTGGI), 118–121 (NKTD), 209–216 (GRPNVGKS), 256–260 (DTAGV), and 321–324 (NKWD) contribute to the GTP site. In terms of domain architecture, KH-like spans 377–461 (RRVGTSMLTR…PIRIQFKEGE (85 aa)).

It belongs to the TRAFAC class TrmE-Era-EngA-EngB-Septin-like GTPase superfamily. EngA (Der) GTPase family. As to quaternary structure, associates with the 50S ribosomal subunit.

GTPase that plays an essential role in the late steps of ribosome biogenesis. The sequence is that of GTPase Der from Escherichia coli O81 (strain ED1a).